Here is a 228-residue protein sequence, read N- to C-terminus: Cytochrome c oxidase subunit 2 (228 aa).

At 1-14 (MPHASQLSLQEAMG) the chain is on the mitochondrial intermembrane side. Residues 15-45 (PTMEEVIFLHDHVLLLTCLMTMVITMFTLTA) form a helical membrane-spanning segment. Topologically, residues 46-59 (TTTALTHNDPTEEV) are mitochondrial matrix. Residues 60-87 (EQLEAAWTVAPIMILILTALPSVRSLYL) traverse the membrane as a helical segment. Over 88-228 (MEEVFNPYLT…HFEQWLISEQ (141 aa)) the chain is Mitochondrial intermembrane. Residues His162, Cys197, Glu199, Cys201, His205, and Met208 each coordinate Cu cation. Glu199 contributes to the Mg(2+) binding site.

The protein belongs to the cytochrome c oxidase subunit 2 family. As to quaternary structure, component of the cytochrome c oxidase (complex IV, CIV), a multisubunit enzyme composed of 14 subunits. The complex is composed of a catalytic core of 3 subunits MT-CO1, MT-CO2 and MT-CO3, encoded in the mitochondrial DNA, and 11 supernumerary subunits COX4I, COX5A, COX5B, COX6A, COX6B, COX6C, COX7A, COX7B, COX7C, COX8 and NDUFA4, which are encoded in the nuclear genome. The complex exists as a monomer or a dimer and forms supercomplexes (SCs) in the inner mitochondrial membrane with NADH-ubiquinone oxidoreductase (complex I, CI) and ubiquinol-cytochrome c oxidoreductase (cytochrome b-c1 complex, complex III, CIII), resulting in different assemblies (supercomplex SCI(1)III(2)IV(1) and megacomplex MCI(2)III(2)IV(2)). Found in a complex with TMEM177, COA6, COX18, COX20, SCO1 and SCO2. Interacts with TMEM177 in a COX20-dependent manner. Interacts with COX20. Interacts with COX16. Cu cation is required as a cofactor.

The protein resides in the mitochondrion inner membrane. It catalyses the reaction 4 Fe(II)-[cytochrome c] + O2 + 8 H(+)(in) = 4 Fe(III)-[cytochrome c] + 2 H2O + 4 H(+)(out). Its function is as follows. Component of the cytochrome c oxidase, the last enzyme in the mitochondrial electron transport chain which drives oxidative phosphorylation. The respiratory chain contains 3 multisubunit complexes succinate dehydrogenase (complex II, CII), ubiquinol-cytochrome c oxidoreductase (cytochrome b-c1 complex, complex III, CIII) and cytochrome c oxidase (complex IV, CIV), that cooperate to transfer electrons derived from NADH and succinate to molecular oxygen, creating an electrochemical gradient over the inner membrane that drives transmembrane transport and the ATP synthase. Cytochrome c oxidase is the component of the respiratory chain that catalyzes the reduction of oxygen to water. Electrons originating from reduced cytochrome c in the intermembrane space (IMS) are transferred via the dinuclear copper A center (CU(A)) of subunit 2 and heme A of subunit 1 to the active site in subunit 1, a binuclear center (BNC) formed by heme A3 and copper B (CU(B)). The BNC reduces molecular oxygen to 2 water molecules using 4 electrons from cytochrome c in the IMS and 4 protons from the mitochondrial matrix. The polypeptide is Cytochrome c oxidase subunit 2 (MT-CO2) (Lycodon semicarinatus (Ryukyu odd-tooth snake)).